Reading from the N-terminus, the 714-residue chain is Polyribonucleotide nucleotidyltransferase (714 aa).

Residues aspartate 487 and aspartate 493 each coordinate Mg(2+). One can recognise a KH domain in the interval 554–613 (PRIEVLQIPTDKIRDVIGTGGKVIREIVEKTGAKINIEDDGTVKVASANGESIRAAIKWI). Positions 623–691 (GQIYDGTVVK…DRGKVRLSMK (69 aa)) constitute an S1 motif domain.

The protein belongs to the polyribonucleotide nucleotidyltransferase family. Mg(2+) is required as a cofactor.

The protein localises to the cytoplasm. It catalyses the reaction RNA(n+1) + phosphate = RNA(n) + a ribonucleoside 5'-diphosphate. Its function is as follows. Involved in mRNA degradation. Catalyzes the phosphorolysis of single-stranded polyribonucleotides processively in the 3'- to 5'-direction. In Afipia carboxidovorans (strain ATCC 49405 / DSM 1227 / KCTC 32145 / OM5) (Oligotropha carboxidovorans), this protein is Polyribonucleotide nucleotidyltransferase.